Reading from the N-terminus, the 555-residue chain is MTTIADLFTKYNCTNCQDDIQGIRVHCAECENFDLCLQCFAAGAEIGAHQNNHSYQFMDTGTSILSVFRGKGAWTAREEIRLLDAIEQYGFGNWEDISKHIETKSAEDAKEEYVNKFVNGTIGRATWTPAQSQRPRLIDHTGDDDAGPLGTNALSTLPPLEINSDEAMQLGYMPNRDSFEREYDPTAEQLISNISLSSEDTEVDVMLKLAHVDIYTRRLRERARRKRMVRDYQLVSNFFRNRNYAQQQGLTKEQREFRDRFRVYAQFYTCNEYERLLGSLEREKELRIRQSELYRYRYNGLTKIAECTHFEQHAATATHRSTGPYGHGKTDHTHTSNGSHRPPSSSLHSPQPNLRKVEMSSGGEASSNSIAPRNTLHIADPTCSGALLPSKNYLDSCRGSSAATMLQTTGMVMGVTVDSGATTGVTSTATTMANLPTNSAKGSQQHLQPLQQHPQLLQSGNQHKMQNEAAGGGSDQVPSMSLKLRTQLEELKHLPQPPGSELLSHNELDLCKKHNITPTTYLSVKTVCLSGAPSLGSPMETSLRKFFIKCGWLSH.

The ZZ-type zinc-finger motif lies at 8–63; the sequence is FTKYNCTNCQDDIQGIRVHCAECENFDLCLQCFAAGAEIGAHQNNHSYQFMDTGTS. Zn(2+)-binding residues include Cys-13, Cys-16, Cys-27, Cys-30, Cys-36, Cys-39, His-49, and His-53. In terms of domain architecture, SANT spans 69-121; sequence RGKGAWTAREEIRLLDAIEQYGFGNWEDISKHIETKSAEDAKEEYVNKFVNGT. The tract at residues 318 to 372 is disordered; sequence THRSTGPYGHGKTDHTHTSNGSHRPPSSSLHSPQPNLRKVEMSSGGEASSNSIAP. Low complexity predominate over residues 339–352; the sequence is SHRPPSSSLHSPQP. Residues 363-372 are compositionally biased toward polar residues; sequence GEASSNSIAP.

As to quaternary structure, component of histone acetyltransferase complexes containing Gcn5 and Ada3. In terms of assembly, can heterooligomerize with Isoform A. Component of the Spt-Ada-Gcn5 acetyltransferase (SAGA) complex consisting of Ada1, Ada2b (Isoform B), Ada3, wda, Saf6, Spt3, Spt7, Spt20, Taf9, Taf10b, Taf12, Nipped-A/Tra1, Sf3b3, Sf3b5, not/nonstop, Sgf11, Sgf29, e(y)2, Atxn7 and Gcn5. Taf5 and Taf10, which has partially redundant properties with Taf10b, may also be part of this complex. Interacts (via C-terminus) with Spt3 and Taf12; the interactions are direct. Interacts with Ada3; the interaction is probably direct. May also interact directly with Spt7 and Gcn5. Interacts with p53. Can heterooligomerize with Isoform B. Component of the Chiffon histone acetyltransferase (CHAT) complex consisting of Ada3, Sgf29, Gcn5, chif/chiffon and Ada2b (Isoform A). Interacts (via N-terminus) with Gcn5 and Ada3; the interaction is direct. Can interact directly with Spt7 in vitro but in vivo this interaction is not stable probably due to the absence of other SAGA components. Interacts with p53. As to expression, expressed in nurse cells of stage 10 egg chambers and transcripts are dumped into the oocyte when nurse cells degenerate at late oogenesis.

Its subcellular location is the nucleus. In terms of biological role, component of several Gcn5-containing histone acetyltransferase complexes that regulate nucleosome organization; involved in acetylation of histone H3, particularly on Lys-10 (H3K9ac) and Lys-15 (H3K14ac). Regulates the transcription of a subset of genes during development; affects recruitment of RNA polymerase II. May be involved in the function of some acidic activation domains, which activate transcription at distant sites. Involved in the p53-dependent apoptosis pathway response to DNA damage by genotoxic agents. Its function is as follows. Component of the SAGA histone acetyltransferase complex, which predominantly acetylates histone H3. Component of the CHAT histone acetyltransferase complex, which predominantly acetylates histone H3. The chain is Transcriptional adapter 2b from Drosophila melanogaster (Fruit fly).